A 133-amino-acid polypeptide reads, in one-letter code: Meiotically up-regulated gene 15 protein (133 aa).

The protein localises to the cytoplasm. It is found in the nucleus. In terms of biological role, has a role in meiosis. This Schizosaccharomyces pombe (strain 972 / ATCC 24843) (Fission yeast) protein is Meiotically up-regulated gene 15 protein (mug15).